The primary structure comprises 464 residues: Probable glycine dehydrogenase (decarboxylating) subunit 1 (464 aa).

The protein belongs to the GcvP family. N-terminal subunit subfamily. The glycine cleavage system is composed of four proteins: P, T, L and H. In this organism, the P 'protein' is a heterodimer of two subunits.

The enzyme catalyses N(6)-[(R)-lipoyl]-L-lysyl-[glycine-cleavage complex H protein] + glycine + H(+) = N(6)-[(R)-S(8)-aminomethyldihydrolipoyl]-L-lysyl-[glycine-cleavage complex H protein] + CO2. Its function is as follows. The glycine cleavage system catalyzes the degradation of glycine. The P protein binds the alpha-amino group of glycine through its pyridoxal phosphate cofactor; CO(2) is released and the remaining methylamine moiety is then transferred to the lipoamide cofactor of the H protein. The polypeptide is Probable glycine dehydrogenase (decarboxylating) subunit 1 (Thiobacillus denitrificans (strain ATCC 25259 / T1)).